The chain runs to 370 residues: 3-isopropylmalate dehydrogenase (370 aa).

77 to 90 (GPKWDSVPYEVRPE) is a binding site for NAD(+). Arg-97, Arg-107, Arg-135, and Asp-226 together coordinate substrate. The Mg(2+) site is built by Asp-226, Asp-250, and Asp-254. 290–302 (GSAPDIAGKGIAN) is an NAD(+) binding site.

This sequence belongs to the isocitrate and isopropylmalate dehydrogenases family. LeuB type 1 subfamily. In terms of assembly, homodimer. Mg(2+) serves as cofactor. Requires Mn(2+) as cofactor.

The protein localises to the cytoplasm. It catalyses the reaction (2R,3S)-3-isopropylmalate + NAD(+) = 4-methyl-2-oxopentanoate + CO2 + NADH. Its pathway is amino-acid biosynthesis; L-leucine biosynthesis; L-leucine from 3-methyl-2-oxobutanoate: step 3/4. In terms of biological role, catalyzes the oxidation of 3-carboxy-2-hydroxy-4-methylpentanoate (3-isopropylmalate) to 3-carboxy-4-methyl-2-oxopentanoate. The product decarboxylates to 4-methyl-2 oxopentanoate. The sequence is that of 3-isopropylmalate dehydrogenase from Brucella abortus (strain 2308).